Consider the following 561-residue polypeptide: Arf-GAP domain and FG repeat-containing protein 1 (561 aa).

The region spanning 11 to 135 (EKHLKMLRDM…WYVPPEQAKV (125 aa)) is the Arf-GAP domain. The segment at 29–52 (CFDCDQRGPTYVNMTVGSFVCTSC) adopts a C4-type zinc-finger fold. Serine 167 carries the post-translational modification Phosphoserine. Positions 170-193 (ALHLNKGTPSQSPVVGRSQGQQQE) are disordered. Over residues 176-191 (GTPSQSPVVGRSQGQQ) the composition is skewed to polar residues. Residue threonine 177 is modified to Phosphothreonine. 2 positions are modified to phosphoserine: serine 181 and serine 362. An O-linked (GlcNAc) serine glycan is attached at serine 367. Residues 413-433 (SAQTQPASSGPAPFGATPSTN) form a disordered region.

In terms of assembly, interacts with FCHO1. Interacts with EPS15R and EPS15. In terms of processing, O-glycosylated. Expressed in the testes (at protein level).

It is found in the nucleus. The protein localises to the cytoplasmic vesicle. In terms of biological role, required for vesicle docking or fusion during acrosome biogenesis. May play a role in RNA trafficking or localization. This chain is Arf-GAP domain and FG repeat-containing protein 1 (Agfg1), found in Mus musculus (Mouse).